Consider the following 340-residue polypeptide: Ketol-acid reductoisomerase (NADP(+)) (340 aa).

The region spanning 1–183 (MAITVYYDKD…GGGRTGIIET (183 aa)) is the KARI N-terminal Rossmann domain. NADP(+) is bound by residues 26 to 29 (FGSQ), arginine 49, serine 52, serine 54, and 84 to 87 (DEIQ). The active site involves histidine 109. NADP(+) is bound at residue glycine 135. The KARI C-terminal knotted domain occupies 184 to 329 (TFKAETETDL…RNLRAMMPWI (146 aa)). Positions 192, 196, 228, and 232 each coordinate Mg(2+). Serine 253 contacts substrate.

It belongs to the ketol-acid reductoisomerase family. Mg(2+) serves as cofactor.

It carries out the reaction (2R)-2,3-dihydroxy-3-methylbutanoate + NADP(+) = (2S)-2-acetolactate + NADPH + H(+). The enzyme catalyses (2R,3R)-2,3-dihydroxy-3-methylpentanoate + NADP(+) = (S)-2-ethyl-2-hydroxy-3-oxobutanoate + NADPH + H(+). Its pathway is amino-acid biosynthesis; L-isoleucine biosynthesis; L-isoleucine from 2-oxobutanoate: step 2/4. It participates in amino-acid biosynthesis; L-valine biosynthesis; L-valine from pyruvate: step 2/4. Involved in the biosynthesis of branched-chain amino acids (BCAA). Catalyzes an alkyl-migration followed by a ketol-acid reduction of (S)-2-acetolactate (S2AL) to yield (R)-2,3-dihydroxy-isovalerate. In the isomerase reaction, S2AL is rearranged via a Mg-dependent methyl migration to produce 3-hydroxy-3-methyl-2-ketobutyrate (HMKB). In the reductase reaction, this 2-ketoacid undergoes a metal-dependent reduction by NADPH to yield (R)-2,3-dihydroxy-isovalerate. The sequence is that of Ketol-acid reductoisomerase (NADP(+)) from Campylobacter jejuni subsp. jejuni serotype O:23/36 (strain 81-176).